We begin with the raw amino-acid sequence, 536 residues long: Light-independent protochlorophyllide reductase subunit B (536 aa).

[4Fe-4S] cluster is bound at residue aspartate 36. Aspartate 274 (proton donor) is an active-site residue. Residue 409–410 (GL) participates in substrate binding. Residues 426–448 (DEAGPSHHGGKAVPASAPRADEA) form a disordered region.

It belongs to the ChlB/BchB/BchZ family. As to quaternary structure, protochlorophyllide reductase is composed of three subunits; BchL, BchN and BchB. Forms a heterotetramer of two BchB and two BchN subunits. [4Fe-4S] cluster is required as a cofactor.

The enzyme catalyses chlorophyllide a + oxidized 2[4Fe-4S]-[ferredoxin] + 2 ADP + 2 phosphate = protochlorophyllide a + reduced 2[4Fe-4S]-[ferredoxin] + 2 ATP + 2 H2O. The protein operates within porphyrin-containing compound metabolism; bacteriochlorophyll biosynthesis (light-independent). Component of the dark-operative protochlorophyllide reductase (DPOR) that uses Mg-ATP and reduced ferredoxin to reduce ring D of protochlorophyllide (Pchlide) to form chlorophyllide a (Chlide). This reaction is light-independent. The NB-protein (BchN-BchB) is the catalytic component of the complex. This Cereibacter sphaeroides (strain KD131 / KCTC 12085) (Rhodobacter sphaeroides) protein is Light-independent protochlorophyllide reductase subunit B.